A 528-amino-acid polypeptide reads, in one-letter code: Potassium voltage-gated channel subfamily A member 3 (528 aa).

A disordered region spans residues 1 to 32 (MTVVPGDHLLEPEAAGGGGGDPPQGGCGSGGG). The Cytoplasmic segment spans residues 1 to 187 (MTVVPGDHLL…EYPESSGPAR (187 aa)). Positions 15–32 (AGGGGGDPPQGGCGSGGG) are enriched in gly residues. The chain crosses the membrane as a helical span at residues 188–206 (GIAIVSVLVILISIVIFCL). Topologically, residues 207–247 (ETLPEFRDEKDYPASPSQDVFEAANNSTSGAPSGASSFSDP) are extracellular. The N-linked (GlcNAc...) asparagine glycan is linked to N232. A helical transmembrane segment spans residues 248 to 269 (FFVVETLCIIWFSFELLVRFFA). C270 carries S-palmitoyl cysteine lipidation. The Cytoplasmic portion of the chain corresponds to 270 to 280 (CPSKATFSRNI). Residues 281 to 301 (MNLIDIVAIIPYFITLGTELA) form a helical membrane-spanning segment. The Extracellular segment spans residues 302-315 (ERQGNGQQAMSLAI). Residues 316 to 334 (LRVIRLVRVFRIFKLSRHS) traverse the membrane as a helical; Voltage-sensor segment. At 335 to 350 (KGLQILGQTLKASMRE) the chain is on the cytoplasmic side. Residues 351 to 370 (LGLLIFFLFIGVILFSSAVY) form a helical membrane-spanning segment. At 371–411 (FAEADDPSSGFNSIPDAFWWAVVTMTTVGYGDMHPVTIGGK) the chain is on the extracellular side. Residues 397–402 (TVGYGD) carry the Selectivity filter motif. A helical transmembrane segment spans residues 412 to 434 (IVGSLCAIAGVLTIALPVPVIVS). Topologically, residues 435-528 (NFNYFYHRET…VNIKKIFTDV (94 aa)) are cytoplasmic. An interaction with KCNE4 region spans residues 435 to 528 (NFNYFYHRET…VNIKKIFTDV (94 aa)). At Y452 the chain carries Phosphotyrosine. S473 is modified (phosphoserine; by PKA). A PDZ-binding motif is present at residues 526–528 (TDV).

It belongs to the potassium channel family. A (Shaker) (TC 1.A.1.2) subfamily. Kv1.3/KCNA3 sub-subfamily. Homotetramer. Forms heterooligomers with KCNE4 which inhibits KCNA3 activity by impairing localization to the cell membrane. The stoichiometry of KCNA3 and KCNE4 in the heterooligomers are 4:1, 4:2, 4:3 or 4:4 respectively. Increasing the number of KCNE4 subunits steadily slows the activation KCNA3 and decreases its abundance at the cell membrane. However, a single subunit of KCNE4 is sufficient for the cooperative enhancement of the inactivating function of the channel. Interacts with SEC24D; this interaction is reduced in the presence of KCNE4. Interacts with DLG1, DLG2 and DLG4 via their PDZ domains. In terms of processing, N-glycosylation promotes the cell surface expression. Phosphorylation on Tyr-452 inhibits its channel activity.

It is found in the cell membrane. The enzyme catalyses K(+)(in) = K(+)(out). With respect to regulation, activity is up-regulated by JAK2. Its function is as follows. Mediates the voltage-dependent potassium ion permeability of excitable membranes. Assuming opened or closed conformations in response to the voltage difference across the membrane, the protein forms a potassium-selective channel through which potassium ions may pass in accordance with their electrochemical gradient. This Mus musculus (Mouse) protein is Potassium voltage-gated channel subfamily A member 3 (Kcna3).